The following is a 76-amino-acid chain: Esculentin-2SN1 (76 aa).

An N-terminal signal peptide occupies residues 1 to 22 (MFTMKKSLLFLFFLGTISLSLC). The propeptide occupies 23-37 (EQERGADEDDGGEEV). A disulfide bridge links Cys70 with Cys76.

This sequence belongs to the frog skin active peptide (FSAP) family. Esculentin subfamily. In terms of tissue distribution, expressed by the skin glands.

Its subcellular location is the secreted. Functionally, antimicrobial peptide. Active against some Gram-negative and a variety of Gram-positive bacterial strains. Not active against fungi. Shows very weak hemolytic activity against human erythrocytes. This Sylvirana spinulosa (Fine-spined frog) protein is Esculentin-2SN1.